A 97-amino-acid chain; its full sequence is MPKMVLLPRMTMALGGYIRETTFPYEEDDEVKPFPYRNVIVGNPTDEPIKIEVPAYNEGWIERHKKLGLIVVPVNEDDDFVGLFQMVKEKVKNAKRE.

This sequence to M.thermoautotrophicum MTH1236.

This is an uncharacterized protein from Methanocaldococcus jannaschii (strain ATCC 43067 / DSM 2661 / JAL-1 / JCM 10045 / NBRC 100440) (Methanococcus jannaschii).